A 60-amino-acid chain; its full sequence is Sperm protamine P1 (60 aa).

Residues 1-60 (MARYRHSRSRSRSRYRRRRRRRSRYRSRRRRXRRRRRSRRGRRRRGYSRRRYSRRRRRRY) form a disordered region.

It belongs to the protamine P1 family. Testis.

It is found in the nucleus. The protein resides in the chromosome. Functionally, protamines substitute for histones in the chromatin of sperm during the haploid phase of spermatogenesis. They compact sperm DNA into a highly condensed, stable and inactive complex. The protein is Sperm protamine P1 (PRM1) of Petrogale concinna (Nabarlek).